The following is a 181-amino-acid chain: Large ribosomal subunit protein uL5 (181 aa).

Belongs to the universal ribosomal protein uL5 family. As to quaternary structure, part of the 50S ribosomal subunit; part of the 5S rRNA/L5/L18/L25 subcomplex. Contacts the 5S rRNA and the P site tRNA. Forms a bridge to the 30S subunit in the 70S ribosome.

Its function is as follows. This is one of the proteins that bind and probably mediate the attachment of the 5S RNA into the large ribosomal subunit, where it forms part of the central protuberance. In the 70S ribosome it contacts protein S13 of the 30S subunit (bridge B1b), connecting the 2 subunits; this bridge is implicated in subunit movement. Contacts the P site tRNA; the 5S rRNA and some of its associated proteins might help stabilize positioning of ribosome-bound tRNAs. This Thermosipho africanus (strain TCF52B) protein is Large ribosomal subunit protein uL5.